The following is a 181-amino-acid chain: MADPGNRGGIHRPLSFTCSLLIVGMCCVSPFFCHSQTDLLALSQADPQCWESSSVLLLEMWKPRVSNTVSGFWDFMIYLKSSENLKHGALFWDLAQLFWDIYVDCVLSRNHGLGRRQLVGEEEKISAAQPQHTRSKQGTYSQLLRTSFLKKKELIEDLISMHVRRSGSSVIGKVNLEIKRK.

The signal sequence occupies residues 1–33 (MADPGNRGGIHRPLSFTCSLLIVGMCCVSPFFC). Position 113 is a leucine amide (leucine 113). The propeptide at 114-181 (GRRQLVGEEE…GKVNLEIKRK (68 aa)) is removed in the mature form.

In terms of processing, the active form requires C-terminal amidation and disulfide bond formation. In terms of tissue distribution, expressed in the pituitary, testis, and heart and at lower levels in the brain.

It localises to the secreted. May be capable of activating GPR83 via the GNAQ signaling pathway. This chain is Protein FAM237A, found in Homo sapiens (Human).